A 418-amino-acid chain; its full sequence is Glutamyl-tRNA(Gln) amidotransferase subunit D (418 aa).

The Asparaginase/glutaminase domain maps to 81 to 407 (PDVKIISTGG…EEAKEMVKKS (327 aa)). Catalysis depends on residues threonine 91, threonine 166, aspartate 167, and lysine 243.

This sequence belongs to the asparaginase 1 family. GatD subfamily. In terms of assembly, heterodimer of GatD and GatE.

It carries out the reaction L-glutamyl-tRNA(Gln) + L-glutamine + ATP + H2O = L-glutaminyl-tRNA(Gln) + L-glutamate + ADP + phosphate + H(+). Allows the formation of correctly charged Gln-tRNA(Gln) through the transamidation of misacylated Glu-tRNA(Gln) in organisms which lack glutaminyl-tRNA synthetase. The reaction takes place in the presence of glutamine and ATP through an activated gamma-phospho-Glu-tRNA(Gln). The GatDE system is specific for glutamate and does not act on aspartate. In Archaeoglobus fulgidus (strain ATCC 49558 / DSM 4304 / JCM 9628 / NBRC 100126 / VC-16), this protein is Glutamyl-tRNA(Gln) amidotransferase subunit D.